Here is a 706-residue protein sequence, read N- to C-terminus: Polyribonucleotide nucleotidyltransferase (706 aa).

D486 and D492 together coordinate Mg(2+). A KH domain is found at 553–612 (PRIHTIKISTDKIKDVIGKGGSVIRALTEETGTTIEIEDDGTVRIASTDGEKAKHAIRRI). The 69-residue stretch at 622–690 (GRVYQGKVTR…RQGRVRLSIK (69 aa)) folds into the S1 motif domain.

This sequence belongs to the polyribonucleotide nucleotidyltransferase family. As to quaternary structure, component of the RNA degradosome, which is a multiprotein complex involved in RNA processing and mRNA degradation. The cofactor is Mg(2+).

It is found in the cytoplasm. It carries out the reaction RNA(n+1) + phosphate = RNA(n) + a ribonucleoside 5'-diphosphate. Involved in mRNA degradation. Catalyzes the phosphorolysis of single-stranded polyribonucleotides processively in the 3'- to 5'-direction. This is Polyribonucleotide nucleotidyltransferase from Pectobacterium atrosepticum (strain SCRI 1043 / ATCC BAA-672) (Erwinia carotovora subsp. atroseptica).